A 341-amino-acid polypeptide reads, in one-letter code: Trimethylamine N-oxide transport system ATP-binding protein TmoW (341 aa).

The ABC transporter domain occupies 6–265 (IKCESVYKIF…PATEYVRKFT (260 aa)). 61–68 (GLSGSGKS) contributes to the ATP binding site.

This sequence belongs to the ABC transporter superfamily. As to quaternary structure, the complex is probably composed of two ATP-binding proteins (TmoW), two transmembrane proteins (TmoV) and a solute-binding protein (TmoX).

It localises to the cell inner membrane. It catalyses the reaction a quaternary ammonium(out) + ATP + H2O = a quaternary ammonium(in) + ADP + phosphate + H(+). In terms of biological role, part of the ABC transporter complex TmoXWV involved in trimethylamine N-oxide (TMAO) import. Responsible for energy coupling to the transport system. This Pelagibacter ubique (strain HTCC1062) protein is Trimethylamine N-oxide transport system ATP-binding protein TmoW.